The chain runs to 283 residues: Probable endonuclease 4 (283 aa).

His-69, His-113, Glu-148, Asp-182, His-185, His-217, Asp-230, His-232, and Glu-262 together coordinate Zn(2+).

This sequence belongs to the AP endonuclease 2 family. The cofactor is Zn(2+).

It catalyses the reaction Endonucleolytic cleavage to 5'-phosphooligonucleotide end-products.. Endonuclease IV plays a role in DNA repair. It cleaves phosphodiester bonds at apurinic or apyrimidinic (AP) sites, generating a 3'-hydroxyl group and a 5'-terminal sugar phosphate. This chain is Probable endonuclease 4, found in Bifidobacterium longum (strain DJO10A).